A 1477-amino-acid polypeptide reads, in one-letter code: Putative insulin-like peptide receptor (1477 aa).

The N-terminal stretch at 1-24 (MMRNVQSFYFLFLLIVLNFHVVLS) is a signal peptide. The Extracellular segment spans residues 25-980 (AVCIGQRATT…LSVTKNNNQL (956 aa)). N-linked (GlcNAc...) asparagine glycans are attached at residues asparagine 55, asparagine 255, asparagine 300, asparagine 325, asparagine 457, asparagine 491, asparagine 549, asparagine 644, asparagine 732, asparagine 791, asparagine 874, asparagine 895, and asparagine 957. 2 consecutive Fibronectin type-III domains span residues 652–750 (EPLG…IKAD) and 780–869 (NKSP…IVQA). Residues 880–971 (LDSKMVRVQV…EEIHFKVAEL (92 aa)) enclose the Fibronectin type-III 3 domain. A helical membrane pass occupies residues 981 to 1001 (IIGIISAVSAVIVALLVFILL). Residues 1002–1477 (YMFLHRKLEK…EIFYGKPIPV (476 aa)) lie on the Cytoplasmic side of the membrane. The Protein kinase domain maps to 1044–1315 (IELIRELGQG…LENEVDDDFV (272 aa)). ATP-binding positions include 1050–1058 (LGQGSFGMV) and lysine 1077. The active-site Proton acceptor is aspartate 1175. Tyrosine 1201 carries the phosphotyrosine; by autocatalysis modification. Disordered stretches follow at residues 1350 to 1376 (YTKG…KSKE) and 1391 to 1421 (KYDA…SNAC). Residues 1356–1368 (NMQNMLSRSQNRK) are compositionally biased toward polar residues. A compositionally biased stretch (basic residues) spans 1403-1412 (KKKKRPRSKR).

This sequence belongs to the protein kinase superfamily. Tyr protein kinase family. Insulin receptor subfamily. It depends on Mn(2+) as a cofactor. As to expression, expressed in dividing epithelial cells.

The protein localises to the membrane. It catalyses the reaction L-tyrosyl-[protein] + ATP = O-phospho-L-tyrosyl-[protein] + ADP + H(+). Its function is as follows. This receptor probably binds an insulin related protein and has a tyrosine-protein kinase activity. This chain is Putative insulin-like peptide receptor (HTK7), found in Hydra vulgaris (Hydra).